A 229-amino-acid polypeptide reads, in one-letter code: NAD(P)H-quinone oxidoreductase subunit K, chloroplastic (229 aa).

Cys-43, Cys-44, Cys-108, and Cys-139 together coordinate [4Fe-4S] cluster.

Belongs to the complex I 20 kDa subunit family. NDH is composed of at least 16 different subunits, 5 of which are encoded in the nucleus. [4Fe-4S] cluster is required as a cofactor.

The protein localises to the plastid. It localises to the chloroplast thylakoid membrane. The enzyme catalyses a plastoquinone + NADH + (n+1) H(+)(in) = a plastoquinol + NAD(+) + n H(+)(out). The catalysed reaction is a plastoquinone + NADPH + (n+1) H(+)(in) = a plastoquinol + NADP(+) + n H(+)(out). Its function is as follows. NDH shuttles electrons from NAD(P)H:plastoquinone, via FMN and iron-sulfur (Fe-S) centers, to quinones in the photosynthetic chain and possibly in a chloroplast respiratory chain. The immediate electron acceptor for the enzyme in this species is believed to be plastoquinone. Couples the redox reaction to proton translocation, and thus conserves the redox energy in a proton gradient. The chain is NAD(P)H-quinone oxidoreductase subunit K, chloroplastic from Piper cenocladum (Ant piper).